Reading from the N-terminus, the 516-residue chain is Extracellular endo-inulinase inuB (516 aa).

Residues 1–25 form the signal peptide; that stretch reads MLNPKVAYMVWMTCLGLTLPSQAQS. Substrate-binding positions include 40–43, Gln59, Trp67, and 99–100; these read WMNE and FT. Glu43 is an active-site residue. N-linked (GlcNAc...) asparagine glycosylation is present at Asn109. Residues 175 to 176 and Glu233 each bind substrate; that span reads RD. Asn372, Asn419, and Asn424 each carry an N-linked (GlcNAc...) asparagine glycan.

Belongs to the glycosyl hydrolase 32 family.

The protein localises to the secreted. It carries out the reaction Endohydrolysis of (2-&gt;1)-beta-D-fructosidic linkages in inulin.. In terms of biological role, endo-inulinase involved in utilization of the plant storage polymer inulin, consisting of fructooligosaccharides with a degree of polymerization (DP) value from 2 to 60. This Aspergillus niger protein is Extracellular endo-inulinase inuB (inuB).